The primary structure comprises 67 residues: Sodium channel neurotoxin MeuNaTxalpha-10 (67 aa).

One can recognise an LCN-type CS-alpha/beta domain in the interval 2–66 (RDGYIAKPHN…VPIRIPGKCH (65 aa)). Intrachain disulfides connect C12–C65, C16–C38, C24–C48, and C28–C50. A propeptide (removed by a carboxypeptidase) is located at residue R67.

It belongs to the long (4 C-C) scorpion toxin superfamily. Sodium channel inhibitor family. Alpha subfamily. Expressed by the venom gland.

Its subcellular location is the secreted. Its function is as follows. Alpha toxins bind voltage-independently at site-3 of sodium channels (Nav) and inhibit the inactivation of the activated channels, thereby blocking neuronal transmission. The polypeptide is Sodium channel neurotoxin MeuNaTxalpha-10 (Mesobuthus eupeus (Lesser Asian scorpion)).